We begin with the raw amino-acid sequence, 527 residues long: Succinate-semialdehyde dehydrogenase, mitochondrial (527 aa).

Residues 1 to 35 constitute a mitochondrion transit peptide; that stretch reads MAMAMAMRRAAALGARHILAASSTSSSGVLLRRHM. NAD(+) contacts are provided by residues Arg-208, 223–226, and 276–281; these read KPSE and GSTAVG. Arg-208 contacts substrate. Glu-298 acts as the Proton acceptor in catalysis. Substrate-binding residues include Arg-326, Cys-332, and Ser-489. Cys-332 (nucleophile) is an active-site residue. Cys-332 and Cys-334 are disulfide-bonded.

Belongs to the aldehyde dehydrogenase family. In terms of assembly, homotetramer.

It localises to the mitochondrion matrix. It catalyses the reaction succinate semialdehyde + NAD(+) + H2O = succinate + NADH + 2 H(+). It functions in the pathway amino-acid degradation; 4-aminobutanoate degradation. Its activity is regulated as follows. Redox-regulated. Inhibited under oxydizing conditions. Its function is as follows. Oxidizes specifically succinate semialdehyde. Involved in plant response to environmental stress by preventing the accumulation of reactive oxygen species. The protein is Succinate-semialdehyde dehydrogenase, mitochondrial (ALDH5F1) of Oryza sativa subsp. japonica (Rice).